We begin with the raw amino-acid sequence, 92 residues long: Small ribosomal subunit protein uS19c (92 aa).

The protein belongs to the universal ribosomal protein uS19 family.

It localises to the plastid. It is found in the chloroplast. In terms of biological role, protein S19 forms a complex with S13 that binds strongly to the 16S ribosomal RNA. This Physcomitrium patens (Spreading-leaved earth moss) protein is Small ribosomal subunit protein uS19c.